Reading from the N-terminus, the 147-residue chain is Hemoglobin subunit deltaH (147 aa).

A Globin domain is found at arginine 3–histidine 147. Histidine 64 and histidine 93 together coordinate heme b.

Belongs to the globin family. In terms of assembly, heterotetramer of two delta chains and two alpha chains. As to expression, red blood cells.

The protein is Hemoglobin subunit deltaH (HBD) of Dendrohyrax dorsalis (Beecroft's tree hyrax).